The primary structure comprises 890 residues: Tyrosine-protein kinase receptor TYRO3 (890 aa).

An N-terminal signal peptide occupies residues 1 to 40; it reads MALRRSMGRPGLPPLPLPPPPRLGLLLAALASLLLPESAA. 2 consecutive Ig-like C2-type domains span residues 41–128 and 139–220; these read AGLK…TEIS and PFFT…ATVH. Over 41–429 the chain is Extracellular; that stretch reads AGLKLMGAPV…QGPPHSRTSW (389 aa). Asparagine 63 carries N-linked (GlcNAc...) asparagine glycosylation. Intrachain disulfides connect cysteine 64/cysteine 117 and cysteine 160/cysteine 203. Asparagine 191, asparagine 230, asparagine 240, asparagine 293, asparagine 366, and asparagine 380 each carry an N-linked (GlcNAc...) asparagine glycan. Fibronectin type-III domains lie at 227–320 and 325–416; these read APFN…TKGL and APQN…SHDR. The helical transmembrane segment at 430-450 threads the bilayer; that stretch reads VPVVLGVLTALVTAAALALIL. Topologically, residues 451–890 are cytoplasmic; it reads LRKRRKETRF…QQGLLPHSSC (440 aa). Serine 466 bears the Phosphoserine mark. One can recognise a Protein kinase domain in the interval 518–790; the sequence is FTLGRMLGKG…CLRMELENIL (273 aa). ATP-binding positions include 524 to 532 and lysine 550; that span reads LGKGEFGSV. Residue aspartate 655 is the Proton acceptor of the active site. 4 positions are modified to phosphotyrosine; by autocatalysis: tyrosine 681, tyrosine 685, tyrosine 686, and tyrosine 804. Disordered stretches follow at residues 815–837 and 851–871; these read AGGSLELPGRDQPYSGAGDGSGM and LTPGGLAEQPGQAEHQPESPL. Phosphoserine occurs at positions 818 and 869.

This sequence belongs to the protein kinase superfamily. Tyr protein kinase family. AXL/UFO subfamily. Monomer and homodimer. Interacts (via N-terminus) with extracellular ligands TULP1 and GAS6. Interacts with PIK3R1; this interaction increases PI3-kinase activity. Autophosphorylated. Abundant in the brain and lower levels in other tissues.

The protein resides in the cell membrane. It carries out the reaction L-tyrosyl-[protein] + ATP = O-phospho-L-tyrosyl-[protein] + ADP + H(+). Its function is as follows. Receptor tyrosine kinase that transduces signals from the extracellular matrix into the cytoplasm by binding to several ligands including TULP1 or GAS6. Regulates many physiological processes including cell survival, migration and differentiation. Ligand binding at the cell surface induces dimerization and autophosphorylation of TYRO3 on its intracellular domain that provides docking sites for downstream signaling molecules. Following activation by ligand, interacts with PIK3R1 and thereby enhances PI3-kinase activity. Activates the AKT survival pathway, including nuclear translocation of NF-kappa-B and up-regulation of transcription of NF-kappa-B-regulated genes. TYRO3 signaling plays a role in various processes such as neuron protection from excitotoxic injury, platelet aggregation and cytoskeleton reorganization. Also plays an important role in inhibition of Toll-like receptors (TLRs)-mediated innate immune response by activating STAT1, which selectively induces production of suppressors of cytokine signaling SOCS1 and SOCS3. In terms of biological role, (Microbial infection) Acts as a receptor for lassa virus and lymphocytic choriomeningitis virus, possibly through GAS6 binding to phosphatidyl-serine at the surface of virion envelope. (Microbial infection) Acts as a receptor for Ebolavirus, possibly through GAS6 binding to phosphatidyl-serine at the surface of virion envelope. This Homo sapiens (Human) protein is Tyrosine-protein kinase receptor TYRO3 (TYRO3).